A 37-amino-acid chain; its full sequence is Large ribosomal subunit protein bL36 (37 aa).

This sequence belongs to the bacterial ribosomal protein bL36 family.

The sequence is that of Large ribosomal subunit protein bL36 from Gloeothece citriformis (strain PCC 7424) (Cyanothece sp. (strain PCC 7424)).